We begin with the raw amino-acid sequence, 209 residues long: Ribosomal RNA large subunit methyltransferase E (209 aa).

Gly63, Trp65, Asp83, Asp99, and Asp124 together coordinate S-adenosyl-L-methionine. Lys164 acts as the Proton acceptor in catalysis. The TRAM domain maps to 191-209; the sequence is EASRGRSREVYIVATGYKG.

It belongs to the class I-like SAM-binding methyltransferase superfamily. RNA methyltransferase RlmE family.

It localises to the cytoplasm. The enzyme catalyses uridine(2552) in 23S rRNA + S-adenosyl-L-methionine = 2'-O-methyluridine(2552) in 23S rRNA + S-adenosyl-L-homocysteine + H(+). Its function is as follows. Specifically methylates the uridine in position 2552 of 23S rRNA at the 2'-O position of the ribose in the fully assembled 50S ribosomal subunit. The polypeptide is Ribosomal RNA large subunit methyltransferase E (Haemophilus influenzae (strain 86-028NP)).